A 265-amino-acid polypeptide reads, in one-letter code: Chlorophyll a-b binding protein 1A, chloroplastic (265 aa).

The N-terminal 34 residues, 1–34 (MAAAAMALSSPSFAGQAVKLSPSASENSGNGRIT), are a transit peptide targeting the chloroplast. A helical membrane pass occupies residues 151-171 (LVHAQSILAIWACQVVLMGAV). Positions 152, 156, 164, 172, 175, and 181 each coordinate chlorophyll b. The chlorophyll a site is built by K212, E213, N216, R218, Q230, H245, and A254. A helical transmembrane segment spans residues 219–239 (LAMFSMFGFFVQAIVTGKGPL). F261 contacts chlorophyll b.

This sequence belongs to the light-harvesting chlorophyll a/b-binding (LHC) protein family. In terms of assembly, the LHC complex consists of chlorophyll a-b binding proteins. It depends on Binds at least 14 chlorophylls (8 Chl-a and 6 Chl-b) and carotenoids such as lutein and neoxanthin. as a cofactor. Post-translationally, photoregulated by reversible phosphorylation of its threonine residues.

Its subcellular location is the plastid. The protein resides in the chloroplast thylakoid membrane. The light-harvesting complex (LHC) functions as a light receptor, it captures and delivers excitation energy to photosystems with which it is closely associated. This chain is Chlorophyll a-b binding protein 1A, chloroplastic (CAB1A), found in Solanum lycopersicum (Tomato).